The following is a 564-amino-acid chain: Sulfite reductase [NADPH] hemoprotein beta-component 2 (564 aa).

[4Fe-4S] cluster-binding residues include C426, C432, C471, and C475. Residue C475 coordinates siroheme.

This sequence belongs to the nitrite and sulfite reductase 4Fe-4S domain family. Alpha(8)-beta(8). The alpha component is a flavoprotein, the beta component is a hemoprotein. Siroheme is required as a cofactor. It depends on [4Fe-4S] cluster as a cofactor.

It carries out the reaction hydrogen sulfide + 3 NADP(+) + 3 H2O = sulfite + 3 NADPH + 4 H(+). It participates in sulfur metabolism; hydrogen sulfide biosynthesis; hydrogen sulfide from sulfite (NADPH route): step 1/1. Functionally, component of the sulfite reductase complex that catalyzes the 6-electron reduction of sulfite to sulfide. This is one of several activities required for the biosynthesis of L-cysteine from sulfate. This chain is Sulfite reductase [NADPH] hemoprotein beta-component 2, found in Klebsiella pneumoniae (strain 342).